The following is a 515-amino-acid chain: MADSLAPLLPTHIEEDEDTSSPLTFDKILEKSLSDFGFSQFLQIVLVGLALTFDSQQIFITVFTDAYPTWHCLDHTICNPATTDICKIPRSAWDWDGGFKGKSVISEFDLECSSSFLRSLPSSTFYVGSIVGGVVLAMIPDGSLGRKQLLFFSSFAMSLTGISIFLSSNIWIYSFLKFVIGFARSQTGTYALVLISERISTKWRPRATMVPFTLFVLGFMSLSGIAYLVRHASWKVLYLCTSIPAGIHSIFIYFFALESPRWLHLEGKNKEAIEVLKRISPANRGYLESVSSRLRPKETLEQTSSYSIKDLFIIKWAFRRVTLVMIIMFGLGMSYYGVPLAVRDIKVNIYMSEALNAMVELPTFVVTPILLEQFSRRSSVLVNCLIGGASGVLCFVMSLYGRTKIAFALELGSFFCARIGFNLMAIYLVELFPTCVRNSATMMLRQALVVGGACCPLIASLGRNVPSLSFAVFGFAMSGLGLFALLLPETKGLSLCDTMEEQEQRDQALKTSHSC.

The Cytoplasmic portion of the chain corresponds to 1–43 (MADSLAPLLPTHIEEDEDTSSPLTFDKILEKSLSDFGFSQFLQ). A helical membrane pass occupies residues 44-64 (IVLVGLALTFDSQQIFITVFT). Residues 65-124 (DAYPTWHCLDHTICNPATTDICKIPRSAWDWDGGFKGKSVISEFDLECSSSFLRSLPSST) are Extracellular-facing. The chain crosses the membrane as a helical span at residues 125 to 145 (FYVGSIVGGVVLAMIPDGSLG). The Cytoplasmic segment spans residues 146-149 (RKQL). Residues 150–172 (LFFSSFAMSLTGISIFLSSNIWI) traverse the membrane as a helical segment. The Extracellular segment spans residues 173–177 (YSFLK). The helical transmembrane segment at 178 to 195 (FVIGFARSQTGTYALVLI) threads the bilayer. Residue 195–202 (ISERISTK) coordinates ATP. At 196–208 (SERISTKWRPRAT) the chain is on the cytoplasmic side. The helical transmembrane segment at 209–229 (MVPFTLFVLGFMSLSGIAYLV) threads the bilayer. Residues 230 to 235 (RHASWK) are Extracellular-facing. Residues 236–256 (VLYLCTSIPAGIHSIFIYFFA) traverse the membrane as a helical segment. Residues 257-320 (LESPRWLHLE…LFIIKWAFRR (64 aa)) are Cytoplasmic-facing. Residues 321-341 (VTLVMIIMFGLGMSYYGVPLA) form a helical membrane-spanning segment. Residues 342-350 (VRDIKVNIY) lie on the Extracellular side of the membrane. Residues 351–371 (MSEALNAMVELPTFVVTPILL) form a helical membrane-spanning segment. Residues 372–379 (EQFSRRSS) are Cytoplasmic-facing. The chain crosses the membrane as a helical span at residues 380 to 400 (VLVNCLIGGASGVLCFVMSLY). The Extracellular segment spans residues 401 to 411 (GRTKIAFALEL). A helical transmembrane segment spans residues 412 to 432 (GSFFCARIGFNLMAIYLVELF). At 433–441 (PTCVRNSAT) the chain is on the cytoplasmic side. The helical transmembrane segment at 442-462 (MMLRQALVVGGACCPLIASLG) threads the bilayer. The Extracellular segment spans residues 463-467 (RNVPS). A helical transmembrane segment spans residues 468-488 (LSFAVFGFAMSGLGLFALLLP). Over 489–515 (ETKGLSLCDTMEEQEQRDQALKTSHSC) the chain is Cytoplasmic.

This sequence belongs to the major facilitator (TC 2.A.1) superfamily. Organic cation transporter (TC 2.A.1.19) family. As to expression, mostly expressed in leaves and siliques, and, to a lower extent, in roots, stems and flowers.

The protein localises to the vacuole membrane. Functionally, high affinity carnitine transporter involved in the active cellular uptake of carnitine. Also transports organic cations. The chain is Organic cation/carnitine transporter 5 (OCT5) from Arabidopsis thaliana (Mouse-ear cress).